We begin with the raw amino-acid sequence, 914 residues long: Caprin-2 (914 aa).

Disordered stretches follow at residues 259 to 283, 298 to 326, 367 to 411, 439 to 480, 495 to 529, 608 to 631, and 718 to 747; these read PLPK…PSGL, EFLN…KEDF, KTVD…LPKD, DGES…SSQR, CLSN…PPLY, HRSF…PELN, and GAGT…AYPL. A compositionally biased stretch (basic and acidic residues) spans 264-273; the sequence is DSQEKTETIK. The span at 274-283 shows a compositional bias: polar residues; the sequence is PDSQSRPSGL. Over residues 370–392 the composition is skewed to basic and acidic residues; that stretch reads DIVKRSTTDPKEKRQRKKAEQDS. Polar residues predominate over residues 469 to 480; the sequence is KSPSDILPSSQR. Residues 508–520 are compositionally biased toward basic and acidic residues; the sequence is LELHSEDKPRKQA. Low complexity predominate over residues 610-626; sequence SFTSAKTSSVTTASTQT. The segment covering 718 to 738 has biased composition (polar residues); it reads GAGTATQRSSAGWSDSSQVSS. One can recognise a C1q domain in the interval 780 to 914; that stretch reads LTQLRVAFSA…TFSGFLLYQD (135 aa). Ca(2+)-binding residues include Asp-865 and Glu-871.

The protein belongs to the caprin family. As to quaternary structure, homotrimer; via C1q domain.

The protein localises to the cytoplasm. It is found in the cell membrane. Functionally, promotes phosphorylation of the Wnt coreceptor LRP6, leading to increased activity of the canonical Wnt signaling pathway. Facilitates constitutive LRP6 phosphorylation by CDK14/CCNY during G2/M stage of the cell cycle, which may potentiate cells for Wnt signaling. May regulate the transport and translation of mRNAs, modulating for instance the expression of proteins involved in synaptic plasticity in neurons. Involved in regulation of growth as erythroblasts shift from a highly proliferative state towards their terminal phase of differentiation. May be involved in apoptosis. The sequence is that of Caprin-2 from Danio rerio (Zebrafish).